The following is a 465-amino-acid chain: Protein hedgehog (465 aa).

Cys79 is lipidated: N-palmitoyl cysteine. Ca(2+)-binding residues include Glu143, Glu144, Asp149, Thr179, Glu180, Asp183, and Asp185. Residue Gly251 is the site of Cholesterol glycine ester attachment.

Belongs to the hedgehog family. In terms of assembly, interacts with shf. In terms of processing, the C-terminal part of the hedgehog protein precursor displays an autoproteolysis activity that results in the cleavage of the full-length protein into two parts (N-product and C-product). In addition, the C-terminal part displays a cholesterol transferase activity that results by the covalent attachment of a cholesterol moiety to the C-terminal of the newly generated N-product. The N-product is the active species in both local and long-range signaling, whereas the C-product has no signaling activity. Cholesterylation is required for N-product targeting to lipid rafts and multimerization. Post-translationally, N-palmitoylation by Rasp of the hedgehog N-product, within the secretory pathway, is required for the embryonic and larval patterning activities of the hedgehog signal.

The protein resides in the nucleus. It is found in the cytoplasm. The protein localises to the cell membrane. It catalyses the reaction glycyl-L-cysteinyl-[protein] + cholesterol + H(+) = [protein]-C-terminal glycyl cholesterol ester + N-terminal L-cysteinyl-[protein]. The C-terminal part of the hedgehog protein precursor displays an autoproteolysis activity that results in the cleavage of the full-length protein into two parts (N-product and C-product). In addition, the C-terminal part displays a cholesterol transferase activity that results by the covalent attachment of a cholesterol moiety to the C-terminal of the newly generated N-product. Once cleaved, the C-product has no signaling activity and diffuses from the cell. Functionally, the dually lipidated hedgehog protein N-product is a morphogen which is essential for a variety of patterning events during development. Establishes the anterior-posterior axis of the embryonic segments and patterns the larval imaginal disks. Binds to the patched (ptc) receptor, which functions in association with smoothened (smo), to activate the transcription of target genes wingless (wg), decapentaplegic (dpp) and ptc. In the absence of hh, ptc represses the constitutive signaling activity of smo through fused (fu). Essential component of a signaling pathway which regulates the Duox-dependent gut immune response to bacterial uracil; required to activate Cad99C-dependent endosome formation, norpA-dependent Ca2+ mobilization and p38 MAPK, which are essential steps in the Duox-dependent production of reactive oxygen species (ROS) in response to intestinal bacterial infection. During photoreceptor differentiation, it up-regulates transcription of Ubr3, which in turn promotes the hh-signaling pathway by mediating the ubiquitination and degradation of cos. In Drosophila erecta (Fruit fly), this protein is Protein hedgehog.